We begin with the raw amino-acid sequence, 359 residues long: Peptide chain release factor 1 (359 aa).

Gln235 is subject to N5-methylglutamine. Residues 283 to 309 (QKAESERSQARRSQVGSGDRSERIRTY) are disordered.

It belongs to the prokaryotic/mitochondrial release factor family. Methylated by PrmC. Methylation increases the termination efficiency of RF1.

It localises to the cytoplasm. Peptide chain release factor 1 directs the termination of translation in response to the peptide chain termination codons UAG and UAA. The protein is Peptide chain release factor 1 of Brucella suis (strain ATCC 23445 / NCTC 10510).